The chain runs to 108 residues: Monothiol bacilliredoxin BrxC (108 aa).

Cys31 is modified (S-bacillithiol cysteine disulfide).

As to quaternary structure, interacts with AbrB, BdhA, Bdr, BrxB, FolD, GapA, GapB, GatA, PfkA, PyrAA, PyrAB, PyrE, PyrG, PyrH, RpsB, RpsK, RpsL, SalA, SucC, Tuf and YtsJ. In terms of processing, cys can react with bacillithiol (BSH) to form mixed disulfides. S-bacillithiolation protects Cys residues against overoxidation by acting as a redox switch in response to oxidative stress.

In terms of biological role, S-bacillithiolation is the formation of mixed disulfide bonds between protein thiols and the general thiol reductant bacillithiol (BSH) under oxidative stress. BSH is an equivalent of glutathione (GSH) in Firmicutes. This protein is a monothiol bacilliredoxin, which debacillithiolates (removes BSH) the S-bacillithiolated glyceraldehyde-3-phosphate dehydrogenases (GAPDHs) GapA and GapB in vivo and probably a number of other oxidized cytosolic proteins. Debacillithiolates the S-bacillithiolated Bdr (Bdr-SSB) and BrxB (BrxB-SSB) in vitro. Involved in maintaining redox homeostasis in response to disulfide stress conditions. This Bacillus subtilis (strain 168) protein is Monothiol bacilliredoxin BrxC.